Reading from the N-terminus, the 586-residue chain is U-box domain-containing protein 73 (586 aa).

Residues 21–122 (KADMSGLQRS…AAGADDGPTR (102 aa)) form a disordered region. Residues 50 to 60 (RSAPTSPLRTP) are compositionally biased toward low complexity. Residues 182–258 (PIPIAHDGTL…SAWCLDHSDL (77 aa)) enclose the U-box domain.

The catalysed reaction is S-ubiquitinyl-[E2 ubiquitin-conjugating enzyme]-L-cysteine + [acceptor protein]-L-lysine = [E2 ubiquitin-conjugating enzyme]-L-cysteine + N(6)-ubiquitinyl-[acceptor protein]-L-lysine.. It participates in protein modification; protein ubiquitination. Possesses E3 ubiquitin-protein ligase in vitro. This Oryza sativa subsp. japonica (Rice) protein is U-box domain-containing protein 73 (PUB73).